Here is a 283-residue protein sequence, read N- to C-terminus: MISITSIQQLRLHLAEEKRKNHSVGFVPTMGALHRGHISLIKQAKAENTVCVASIFVNPLQFNNPEDFNKYPIQRESDMKLMSEAGCDILFMPDVAEFYPTRPNMKIDIGLLDQILEGAHRPGHFSGVAIVVSKLFHIIEPGKAYFGQKDIQQVAVIRQLVSELNFPIEIIACPIIREESGLAMSSRNMRLSAQGKAVAANIYKALSVIEKQIKQDKVTVSDAQHAGKNYLNQFKEIEVEYLEIVAADTLEAITEYADQTKIAVCIAAYVEGVRLIDNLVIIL.

ATP is bound at residue 30 to 37 (MGALHRGH). Catalysis depends on H37, which acts as the Proton donor. Residue Q61 participates in (R)-pantoate binding. Q61 is a binding site for beta-alanine. 147-150 (GQKD) is a binding site for ATP. Residue Q153 coordinates (R)-pantoate. ATP-binding positions include I176 and 184–187 (MSSR).

Belongs to the pantothenate synthetase family. Homodimer.

The protein localises to the cytoplasm. It catalyses the reaction (R)-pantoate + beta-alanine + ATP = (R)-pantothenate + AMP + diphosphate + H(+). The protein operates within cofactor biosynthesis; (R)-pantothenate biosynthesis; (R)-pantothenate from (R)-pantoate and beta-alanine: step 1/1. Catalyzes the condensation of pantoate with beta-alanine in an ATP-dependent reaction via a pantoyl-adenylate intermediate. The polypeptide is Pantothenate synthetase (Cytophaga hutchinsonii (strain ATCC 33406 / DSM 1761 / CIP 103989 / NBRC 15051 / NCIMB 9469 / D465)).